Reading from the N-terminus, the 981-residue chain is Anoctamin-3 (981 aa).

The segment covering Met-1–Ala-28 has biased composition (polar residues). 2 disordered regions span residues Met-1–Pro-32 and Pro-67–Arg-87. Residues Met-1–Thr-403 are Cytoplasmic-facing. Basic and acidic residues predominate over residues Asp-76 to Arg-87. Residues Gly-404–Met-424 traverse the membrane as a helical segment. Residues Asn-425, Asn-448, and Asn-455 are each glycosylated (N-linked (GlcNAc...) asparagine). The Extracellular segment spans residues Asn-425–Asn-469. Residues Gly-470–Trp-490 form a helical membrane-spanning segment. The Cytoplasmic segment spans residues Lys-491–Ser-550. Residues Val-551–Tyr-571 traverse the membrane as a helical segment. At Arg-572 to Gln-592 the chain is on the extracellular side. A helical membrane pass occupies residues Phe-593 to Ala-613. The Cytoplasmic segment spans residues Tyr-614 to Lys-640. The chain crosses the membrane as a helical span at residues Met-641–Gly-661. Over Arg-662–Gln-761 the chain is Extracellular. A helical transmembrane segment spans residues Phe-762–Asn-782. Residues Asn-783 to Gly-810 lie on the Cytoplasmic side of the membrane. A helical membrane pass occupies residues Ile-811–Ile-831. Topologically, residues Ala-832–Leu-914 are extracellular. Residue Asn-866 is glycosylated (N-linked (GlcNAc...) asparagine). The helical transmembrane segment at Ala-915–Ile-935 threads the bilayer. Residues Pro-936 to Pro-981 are Cytoplasmic-facing.

This sequence belongs to the anoctamin family. Interacts with KCNT1/Slack. In terms of tissue distribution, predominantly expressed in neuronal tissues. Expressed in brain.

Its subcellular location is the cell membrane. It carries out the reaction a 1,2-diacyl-sn-glycero-3-phosphocholine(in) = a 1,2-diacyl-sn-glycero-3-phosphocholine(out). The enzyme catalyses a beta-D-galactosyl-(1&lt;-&gt;1')-N-acylsphing-4-enine(out) = a beta-D-galactosyl-(1&lt;-&gt;1')-N-acylsphing-4-enine(in). Has calcium-dependent phospholipid scramblase activity; scrambles phosphatidylcholine and galactosylceramide. Does not exhibit calcium-activated chloride channel (CaCC) activity. Seems to act as potassium channel regulator and may inhibit pain signaling; can facilitate KCNT1/Slack channel activity by promoting its full single-channel conductance at very low sodium concentrations and by increasing its sodium sensitivity. The protein is Anoctamin-3 of Mus musculus (Mouse).